Consider the following 289-residue polypeptide: Light-independent protochlorophyllide reductase iron-sulfur ATP-binding protein (289 aa).

ATP is bound by residues Gly-10–Thr-15 and Lys-39. Ser-14 is a binding site for Mg(2+). The [4Fe-4S] cluster site is built by Cys-95 and Cys-129. Asn-180–Arg-181 provides a ligand contact to ATP.

Belongs to the NifH/BchL/ChlL family. In terms of assembly, homodimer. Protochlorophyllide reductase is composed of three subunits; ChlL, ChlN and ChlB. Requires [4Fe-4S] cluster as cofactor.

It is found in the plastid. The protein resides in the chloroplast. The catalysed reaction is chlorophyllide a + oxidized 2[4Fe-4S]-[ferredoxin] + 2 ADP + 2 phosphate = protochlorophyllide a + reduced 2[4Fe-4S]-[ferredoxin] + 2 ATP + 2 H2O. Its pathway is porphyrin-containing compound metabolism; chlorophyll biosynthesis (light-independent). Component of the dark-operative protochlorophyllide reductase (DPOR) that uses Mg-ATP and reduced ferredoxin to reduce ring D of protochlorophyllide (Pchlide) to form chlorophyllide a (Chlide). This reaction is light-independent. The L component serves as a unique electron donor to the NB-component of the complex, and binds Mg-ATP. This is Light-independent protochlorophyllide reductase iron-sulfur ATP-binding protein from Marchantia polymorpha (Common liverwort).